The following is a 276-amino-acid chain: MNSLQALIEQAFENRQNLSLDTASSDLINAINEVLSGLDNGQFRVAEKINGEWTVHQWLKKAVLLSFKLFPNQIIDAGFCQFYDKIPLKYTDCSNEQFSQSGVRVVPHGMVRRGAYIAKNTVLMPSYVNIGAYIDEGVMVDTWATVGSCAQIGKNVHISGGAGIGGVLEPLQANPTIIEDNCFIGARSEIVEGVIVEKNSVISMGVFLGQSTKIYNRITGEVSYGRIPAGSVVVAGNLPSHDGSHSLYCAVIVKQVDEKTRAKVSINDLLRANQDD.

Residues Arg-104 and Asp-141 each coordinate substrate.

The protein belongs to the transferase hexapeptide repeat family. As to quaternary structure, homotrimer.

The protein resides in the cytoplasm. It catalyses the reaction (S)-2,3,4,5-tetrahydrodipicolinate + succinyl-CoA + H2O = (S)-2-succinylamino-6-oxoheptanedioate + CoA. Its pathway is amino-acid biosynthesis; L-lysine biosynthesis via DAP pathway; LL-2,6-diaminopimelate from (S)-tetrahydrodipicolinate (succinylase route): step 1/3. The protein is 2,3,4,5-tetrahydropyridine-2,6-dicarboxylate N-succinyltransferase of Legionella pneumophila (strain Corby).